Consider the following 474-residue polypeptide: Dihydrolipoyl dehydrogenase (474 aa).

FAD-binding positions include 34–51, Lys-60, and Gly-124; that span reads EGNP…GGTC. A disulfide bridge links Cys-51 with Cys-56. NAD(+)-binding positions include 189-193, Glu-212, Val-246, and 278-281; these read GAGVI and SVGR. Residues Asp-321 and Ala-329 each contribute to the FAD site. The Proton acceptor role is filled by His-453.

The protein belongs to the class-I pyridine nucleotide-disulfide oxidoreductase family. The cofactor is FAD.

It localises to the cytoplasm. The enzyme catalyses N(6)-[(R)-dihydrolipoyl]-L-lysyl-[protein] + NAD(+) = N(6)-[(R)-lipoyl]-L-lysyl-[protein] + NADH + H(+). The branched-chain alpha-keto dehydrogenase complex catalyzes the overall conversion of alpha-keto acids to acyl-CoA and CO(2). It contains multiple copies of 3 enzymatic components: branched-chain alpha-keto acid decarboxylase (E1), lipoamide acyltransferase (E2) and lipoamide dehydrogenase (E3). This chain is Dihydrolipoyl dehydrogenase (odhL), found in Cupriavidus necator (strain ATCC 17699 / DSM 428 / KCTC 22496 / NCIMB 10442 / H16 / Stanier 337) (Ralstonia eutropha).